A 486-amino-acid polypeptide reads, in one-letter code: ATP-dependent rRNA helicase RRP3 (486 aa).

Residues 1 to 58 are disordered; the sequence is MNGAKRRKVAQDTPRNTKPVAQEKPARAEPKPSSDEESEEESATLEEPSAEETAVDAP. The span at 24 to 34 shows a compositional bias: basic and acidic residues; that stretch reads KPARAEPKPSS. Residues 35–54 show a composition bias toward acidic residues; the sequence is DEESEEESATLEEPSAEETA. Residues 60–88 carry the Q motif motif; it reads KTFKDLGVNDALCEACEKLNYKYPTPIQE. One can recognise a Helicase ATP-binding domain in the interval 91 to 262; that stretch reads IPVALQGRDI…RASLRDPVKV (172 aa). Residue 104–111 participates in ATP binding; the sequence is AETGSGKT. The DEAD box signature appears at 210-213; it reads DEAD. The Helicase C-terminal domain occupies 286 to 434; that stretch reads QKDVHLIYLI…EYPTEKEEVM (149 aa). 2 stretches are compositionally biased toward basic and acidic residues: residues 451 to 460 and 476 to 486; these read MKSFTEERGK and RGRDDMDREEG. A disordered region spans residues 451 to 486; sequence MKSFTEERGKKGSTLKGGRGKKGGKRGRDDMDREEG.

This sequence belongs to the DEAD box helicase family. DDX47/RRP3 subfamily. As to quaternary structure, interacts with the SSU processome.

Its subcellular location is the nucleus. It carries out the reaction ATP + H2O = ADP + phosphate + H(+). In terms of biological role, ATP-dependent rRNA helicase required for pre-ribosomal RNA processing. Involved in the maturation of the 35S-pre-rRNA and to its cleavage to mature 18S rRNA. In Gibberella zeae (strain ATCC MYA-4620 / CBS 123657 / FGSC 9075 / NRRL 31084 / PH-1) (Wheat head blight fungus), this protein is ATP-dependent rRNA helicase RRP3.